Here is a 204-residue protein sequence, read N- to C-terminus: Photosynthetic NDH subunit of subcomplex B 3, chloroplastic (204 aa).

2 disordered regions span residues 1–24 (MGSV…FSHK) and 45–68 (KTVR…DEPP). The transit peptide at 1-48 (MGSVQLSGSGLVASLPPNHSFSHKTKLNKPNSYFFRSKHNAARTKTVR) directs the protein to the chloroplast. The region spanning 76–180 (HSVLLPDGTP…STGLVVIQQL (105 aa)) is the 2Fe-2S ferredoxin-type domain. C120, C126, C129, and C162 together coordinate [2Fe-2S] cluster.

Part of the chloroplast NDH complex, composed of a mixture of chloroplast and nucleus encoded subunits. Component of the NDH subcomplex B, at least composed of PnsB1, PnsB2, PnsB3, PnsB4 and PnsB5.

It is found in the plastid. The protein localises to the chloroplast thylakoid membrane. In terms of biological role, NDH shuttles electrons from NAD(P)H:plastoquinone, via FMN and iron-sulfur (Fe-S) centers, to quinones in the photosynthetic chain and possibly in a chloroplast respiratory chain. The immediate electron acceptor for the enzyme in this species is believed to be plastoquinone. Couples the redox reaction to proton translocation, and thus conserves the redox energy in a proton gradient. The polypeptide is Photosynthetic NDH subunit of subcomplex B 3, chloroplastic (Arabidopsis thaliana (Mouse-ear cress)).